The following is a 161-amino-acid chain: MGNKIAVIPGTFDPITNGHLDIIERAAKIFDVLYVAVLNNSSKKPLFTVEERMEMIKQVTAHLPNVAVESASGLTVDYAAKRGATAIVRGLRAVSDFEYEMQIASMNRTLNAEIETFFVMTNTKYSFLSSSMVKEVAQYQGDISELVPEMVNRAIQVKFNK.

Thr-11 contacts substrate. ATP-binding positions include Thr-11 to Phe-12 and His-19. The substrate site is built by Lys-43, Thr-75, and Arg-89. ATP is bound by residues Gly-90 to Arg-92, Glu-100, and Tyr-125 to Ser-131.

It belongs to the bacterial CoaD family. Homohexamer. Mg(2+) is required as a cofactor.

It localises to the cytoplasm. The catalysed reaction is (R)-4'-phosphopantetheine + ATP + H(+) = 3'-dephospho-CoA + diphosphate. Its pathway is cofactor biosynthesis; coenzyme A biosynthesis; CoA from (R)-pantothenate: step 4/5. Functionally, reversibly transfers an adenylyl group from ATP to 4'-phosphopantetheine, yielding dephospho-CoA (dPCoA) and pyrophosphate. In Listeria welshimeri serovar 6b (strain ATCC 35897 / DSM 20650 / CCUG 15529 / CIP 8149 / NCTC 11857 / SLCC 5334 / V8), this protein is Phosphopantetheine adenylyltransferase.